The chain runs to 360 residues: Phospho-N-acetylmuramoyl-pentapeptide-transferase (360 aa).

A run of 10 helical transmembrane segments spans residues Ile27 to Phe47, Thr71 to Val91, Asn94 to Val114, Trp132 to Gly152, Val168 to Ser188, Gly199 to Thr219, Ala236 to Phe256, Val263 to Leu283, Phe288 to Val308, and Val338 to Lys358.

This sequence belongs to the glycosyltransferase 4 family. MraY subfamily. Mg(2+) serves as cofactor.

It localises to the cell inner membrane. It carries out the reaction UDP-N-acetyl-alpha-D-muramoyl-L-alanyl-gamma-D-glutamyl-meso-2,6-diaminopimeloyl-D-alanyl-D-alanine + di-trans,octa-cis-undecaprenyl phosphate = di-trans,octa-cis-undecaprenyl diphospho-N-acetyl-alpha-D-muramoyl-L-alanyl-D-glutamyl-meso-2,6-diaminopimeloyl-D-alanyl-D-alanine + UMP. The protein operates within cell wall biogenesis; peptidoglycan biosynthesis. In terms of biological role, catalyzes the initial step of the lipid cycle reactions in the biosynthesis of the cell wall peptidoglycan: transfers peptidoglycan precursor phospho-MurNAc-pentapeptide from UDP-MurNAc-pentapeptide onto the lipid carrier undecaprenyl phosphate, yielding undecaprenyl-pyrophosphoryl-MurNAc-pentapeptide, known as lipid I. In Photorhabdus laumondii subsp. laumondii (strain DSM 15139 / CIP 105565 / TT01) (Photorhabdus luminescens subsp. laumondii), this protein is Phospho-N-acetylmuramoyl-pentapeptide-transferase.